A 482-amino-acid polypeptide reads, in one-letter code: tRNA sulfurtransferase (482 aa).

Residues 61–165 (LAIRDALTRI…DDRLLLIKGR (105 aa)) form the THUMP domain. Residues 183–184 (LI), Lys265, Gly287, and Gln296 contribute to the ATP site. A disulfide bond links Cys344 and Cys456. In terms of domain architecture, Rhodanese spans 404-482 (FGPNDVILDI…GFANVKVYRP (79 aa)). Cys456 serves as the catalytic Cysteine persulfide intermediate.

It belongs to the ThiI family.

It localises to the cytoplasm. It carries out the reaction [ThiI sulfur-carrier protein]-S-sulfanyl-L-cysteine + a uridine in tRNA + 2 reduced [2Fe-2S]-[ferredoxin] + ATP + H(+) = [ThiI sulfur-carrier protein]-L-cysteine + a 4-thiouridine in tRNA + 2 oxidized [2Fe-2S]-[ferredoxin] + AMP + diphosphate. It catalyses the reaction [ThiS sulfur-carrier protein]-C-terminal Gly-Gly-AMP + S-sulfanyl-L-cysteinyl-[cysteine desulfurase] + AH2 = [ThiS sulfur-carrier protein]-C-terminal-Gly-aminoethanethioate + L-cysteinyl-[cysteine desulfurase] + A + AMP + 2 H(+). Its pathway is cofactor biosynthesis; thiamine diphosphate biosynthesis. Catalyzes the ATP-dependent transfer of a sulfur to tRNA to produce 4-thiouridine in position 8 of tRNAs, which functions as a near-UV photosensor. Also catalyzes the transfer of sulfur to the sulfur carrier protein ThiS, forming ThiS-thiocarboxylate. This is a step in the synthesis of thiazole, in the thiamine biosynthesis pathway. The sulfur is donated as persulfide by IscS. The protein is tRNA sulfurtransferase of Salmonella heidelberg (strain SL476).